Here is a 155-residue protein sequence, read N- to C-terminus: Aspartate carbamoyltransferase regulatory chain (155 aa).

Cysteine 109, cysteine 114, cysteine 138, and cysteine 141 together coordinate Zn(2+).

It belongs to the PyrI family. Contains catalytic and regulatory chains. Requires Zn(2+) as cofactor.

Its function is as follows. Involved in allosteric regulation of aspartate carbamoyltransferase. This is Aspartate carbamoyltransferase regulatory chain from Vibrio cholerae serotype O1 (strain ATCC 39541 / Classical Ogawa 395 / O395).